Here is a 191-residue protein sequence, read N- to C-terminus: Protein YceI (191 aa).

Residues 1–22 form the signal peptide; sequence MKKNLLGFTLASLLFTTGSAVA.

Belongs to the UPF0312 family. Type 1 subfamily.

The protein localises to the periplasm. This is Protein YceI from Salmonella newport (strain SL254).